We begin with the raw amino-acid sequence, 98 residues long: NADH-ubiquinone oxidoreductase chain 4L (98 aa).

3 consecutive transmembrane segments (helical) span residues 1-21, 29-49, and 61-81; these read MSLV…GLLM, SLLC…LTIL, and IILL…LVMV.

This sequence belongs to the complex I subunit 4L family. As to quaternary structure, core subunit of respiratory chain NADH dehydrogenase (Complex I) which is composed of 45 different subunits.

It is found in the mitochondrion inner membrane. It catalyses the reaction a ubiquinone + NADH + 5 H(+)(in) = a ubiquinol + NAD(+) + 4 H(+)(out). Core subunit of the mitochondrial membrane respiratory chain NADH dehydrogenase (Complex I) which catalyzes electron transfer from NADH through the respiratory chain, using ubiquinone as an electron acceptor. Part of the enzyme membrane arm which is embedded in the lipid bilayer and involved in proton translocation. The polypeptide is NADH-ubiquinone oxidoreductase chain 4L (MT-ND4L) (Elaphodus cephalophus (Tufted deer)).